We begin with the raw amino-acid sequence, 221 residues long: Arginine ABC transporter permease protein ArtQ (221 aa).

In terms of domain architecture, ABC transmembrane type-1 spans 13 to 206 (ALMTLGLAVC…AVTLISQVGI (194 aa)). 5 helical membrane-spanning segments follow: residues 17–37 (LGLA…FAVL), 49–69 (VFVA…VYFG), 82–102 (IEFG…AAYA), 121–141 (GAAL…PQVW), and 186–206 (TWYG…QVGI).

It belongs to the binding-protein-dependent transport system permease family. HisMQ subfamily. As to quaternary structure, the complex is composed of two ATP-binding proteins (ArtP), two transmembrane proteins (ArtM and ArtQ) and a solute-binding protein (ArtI).

It localises to the cell inner membrane. Its function is as follows. Part of the ABC transporter complex ArtPIQM involved in arginine transport. Probably responsible for the translocation of the substrate across the membrane. The sequence is that of Arginine ABC transporter permease protein ArtQ (artQ) from Haemophilus influenzae (strain ATCC 51907 / DSM 11121 / KW20 / Rd).